Here is a 217-residue protein sequence, read N- to C-terminus: Small ribosomal subunit protein uS3 (217 aa).

In terms of domain architecture, KH type-2 spans 40–110; sequence IRDLINKWFN…EVYINIHEVR (71 aa).

This sequence belongs to the universal ribosomal protein uS3 family. Part of the 30S ribosomal subunit. Forms a tight complex with proteins S10 and S14.

Its function is as follows. Binds the lower part of the 30S subunit head. Binds mRNA in the 70S ribosome, positioning it for translation. The sequence is that of Small ribosomal subunit protein uS3 from Rickettsia typhi (strain ATCC VR-144 / Wilmington).